The chain runs to 405 residues: Tyrosine--tRNA ligase (405 aa).

The 'HIGH' region signature appears at 41–50 (PTAPDLHLGH). The 'KMSKS' region motif lies at 225–229 (KMSKS). K228 lines the ATP pocket. Positions 342–404 (EPLLVWVLSK…GKKGKFLKII (63 aa)) constitute an S4 RNA-binding domain.

It belongs to the class-I aminoacyl-tRNA synthetase family. TyrS type 2 subfamily. As to quaternary structure, homodimer.

Its subcellular location is the cytoplasm. It carries out the reaction tRNA(Tyr) + L-tyrosine + ATP = L-tyrosyl-tRNA(Tyr) + AMP + diphosphate + H(+). In terms of biological role, catalyzes the attachment of tyrosine to tRNA(Tyr) in a two-step reaction: tyrosine is first activated by ATP to form Tyr-AMP and then transferred to the acceptor end of tRNA(Tyr). The polypeptide is Tyrosine--tRNA ligase (Leptospira interrogans serogroup Icterohaemorrhagiae serovar Lai (strain 56601)).